Reading from the N-terminus, the 556-residue chain is Sensory neuron membrane protein 2 (556 aa).

Topologically, residues 1-6 (MIHWSL) are cytoplasmic. A helical transmembrane segment spans residues 7-27 (IVSALGVCVAVLGGYCGWILF). Residues 28–522 (PNMVHKKVEQ…KLINTLKTLN (495 aa)) lie on the Extracellular side of the membrane. 4 N-linked (GlcNAc...) asparagine glycosylation sites follow: Asn66, Asn274, Asn310, and Asn324. Intrachain disulfides connect Cys320/Cys388 and Cys349/Cys415. The chain crosses the membrane as a helical span at residues 523-543 (IVHWATLCGGIGVAVACLIYY). At 544–556 (IYQRGRVVEPPVK) the chain is on the cytoplasmic side.

Belongs to the CD36 family. In terms of tissue distribution, detected in the head and to a lesser extent in legs and wings.

Its subcellular location is the cell membrane. In terms of biological role, plays an olfactory role that is not restricted to pheromone sensitivity. In Drosophila melanogaster (Fruit fly), this protein is Sensory neuron membrane protein 2.